Here is a 297-residue protein sequence, read N- to C-terminus: ATP phosphoribosyltransferase (297 aa).

The protein belongs to the ATP phosphoribosyltransferase family.

The protein localises to the cytoplasm. It carries out the reaction 1-(5-phospho-beta-D-ribosyl)-ATP + diphosphate = 5-phospho-alpha-D-ribose 1-diphosphate + ATP. The protein operates within amino-acid biosynthesis; L-histidine biosynthesis; L-histidine from 5-phospho-alpha-D-ribose 1-diphosphate: step 1/9. Its function is as follows. Catalyzes the condensation of ATP and 5-phosphoribose 1-diphosphate to form N'-(5'-phosphoribosyl)-ATP (PR-ATP). Has a crucial role in the pathway because the rate of histidine biosynthesis seems to be controlled primarily by regulation of the enzymatic activity. In Eremothecium gossypii (strain ATCC 10895 / CBS 109.51 / FGSC 9923 / NRRL Y-1056) (Yeast), this protein is ATP phosphoribosyltransferase (HIS1).